Here is a 268-residue protein sequence, read N- to C-terminus: 4-pyridoxolactonase (268 aa).

Zn(2+) is bound by residues H96, H98, D100, H101, H185, D207, and H252. Residue D100 is the Proton donor/acceptor of the active site.

This sequence belongs to the metallo-beta-lactamase superfamily. In terms of assembly, homodimer. It depends on Zn(2+) as a cofactor.

It carries out the reaction 4-pyridoxolactone + H2O = 4-pyridoxate + H(+). It participates in cofactor degradation; B6 vitamer degradation; 4-pyridoxate from pyridoxal: step 2/2. Inhibited by Hg(2+). Functionally, involved in the degradation of pyridoxine or pyridoxamine (free, phosphate-unbound, forms of vitamin B6). Hydrolyzes 4-pyridoxolactone to 4-pyridoxic acid. Has lower activity toward N-hexanoyl-D,L-homoserine lactone, but is not active toward 5-pyridoxolactone and gamma-butyrolactone. This Mesorhizobium japonicum (strain LMG 29417 / CECT 9101 / MAFF 303099) (Mesorhizobium loti (strain MAFF 303099)) protein is 4-pyridoxolactonase.